We begin with the raw amino-acid sequence, 957 residues long: Glycine dehydrogenase (decarboxylating) (957 aa).

Lys708 bears the N6-(pyridoxal phosphate)lysine mark.

The protein belongs to the GcvP family. In terms of assembly, the glycine cleavage system is composed of four proteins: P, T, L and H. It depends on pyridoxal 5'-phosphate as a cofactor.

The enzyme catalyses N(6)-[(R)-lipoyl]-L-lysyl-[glycine-cleavage complex H protein] + glycine + H(+) = N(6)-[(R)-S(8)-aminomethyldihydrolipoyl]-L-lysyl-[glycine-cleavage complex H protein] + CO2. Functionally, the glycine cleavage system catalyzes the degradation of glycine. The P protein binds the alpha-amino group of glycine through its pyridoxal phosphate cofactor; CO(2) is released and the remaining methylamine moiety is then transferred to the lipoamide cofactor of the H protein. In Escherichia coli (strain K12 / MC4100 / BW2952), this protein is Glycine dehydrogenase (decarboxylating).